The chain runs to 580 residues: Efflux pump dotC (580 aa).

The span at 1 to 34 (MSEDHTKADNLSEKDPHSPERSDSSSHEDAHARE) shows a compositional bias: basic and acidic residues. Positions 1–45 (MSEDHTKADNLSEKDPHSPERSDSSSHEDAHAREEEESSDDDGAL) are disordered. A glycan (N-linked (GlcNAc...) asparagine) is linked at N10. Residues 35–44 (EEESSDDDGA) are compositionally biased toward acidic residues. A helical transmembrane segment spans residues 49-69 (PASLIAIVMIALSLAVFLSAL). N-linked (GlcNAc...) asparagine glycosylation is present at N86. 13 helical membrane passes run 89–109 (AAYT…TPIW), 127–147 (ALFM…MLIT), 153–173 (GAAG…LFSL), 181–201 (GMIG…GGAF), 209–229 (WCFY…FFFL), 242–262 (FAAI…MFLF), 275–295 (SATV…FGLV), 318–338 (ALLV…YLPL), 348–368 (PILA…SAAA), 380–400 (LIPM…LINF), 409–429 (LIIY…APLV), 444–466 (TATF…QVLY), and 519–539 (SPMW…ILLV). The disordered stretch occupies residues 559-580 (KKAEAERKAERQAKDLEKAQKS).

It belongs to the major facilitator superfamily. TCR/Tet family.

Its subcellular location is the cell membrane. It is found in the vacuole membrane. Its function is as follows. Efflux pump; part of the gene cluster that mediates the biosynthesis of dothistromin (DOTH), a polyketide toxin very similar in structure to the aflatoxin precursor, versicolorin B. One function of dotC may be to transport early-stage dothistromin biosynthetic intermediates from the cytoplasm into vacuoles, thereby affecting the rate of dothistromin production. This is Efflux pump dotC from Dothistroma septosporum (strain NZE10 / CBS 128990) (Red band needle blight fungus).